A 177-amino-acid chain; its full sequence is Large ribosomal subunit protein uL6 (177 aa).

The protein belongs to the universal ribosomal protein uL6 family. In terms of assembly, part of the 50S ribosomal subunit.

In terms of biological role, this protein binds to the 23S rRNA, and is important in its secondary structure. It is located near the subunit interface in the base of the L7/L12 stalk, and near the tRNA binding site of the peptidyltransferase center. The sequence is that of Large ribosomal subunit protein uL6 from Shewanella denitrificans (strain OS217 / ATCC BAA-1090 / DSM 15013).